The sequence spans 414 residues: 2,3-diketo-5-methylthiopentyl-1-phosphate enolase (414 aa).

Catalysis depends on Lys-99, which acts as the Proton acceptor. Residues Lys-148, 174-177 (KDDE), His-265, Gly-338, and 360-361 (GG) contribute to the substrate site. Mg(2+) is bound by residues Lys-174, Asp-176, and Glu-177. N6-carboxylysine is present on Lys-174.

It belongs to the RuBisCO large chain family. Type IV subfamily. In terms of assembly, homodimer. Mg(2+) serves as cofactor.

It catalyses the reaction 5-methylsulfanyl-2,3-dioxopentyl phosphate = 2-hydroxy-5-methylsulfanyl-3-oxopent-1-enyl phosphate. It functions in the pathway amino-acid biosynthesis; L-methionine biosynthesis via salvage pathway; L-methionine from S-methyl-5-thio-alpha-D-ribose 1-phosphate: step 3/6. Its function is as follows. Catalyzes the enolization of 2,3-diketo-5-methylthiopentyl-1-phosphate (DK-MTP-1-P) into 2-hydroxy-3-keto-5-methylthiopentenyl-1-phosphate (HK-MTPenyl-1-P). The polypeptide is 2,3-diketo-5-methylthiopentyl-1-phosphate enolase (Bacillus cereus (strain AH187)).